A 207-amino-acid polypeptide reads, in one-letter code: Dephospho-CoA kinase (207 aa).

The DPCK domain occupies 4-203 (VIGLTGGIAS…EEGYIEKPNY (200 aa)). 12-17 (ASGKST) lines the ATP pocket.

Belongs to the CoaE family.

It is found in the cytoplasm. It carries out the reaction 3'-dephospho-CoA + ATP = ADP + CoA + H(+). It functions in the pathway cofactor biosynthesis; coenzyme A biosynthesis; CoA from (R)-pantothenate: step 5/5. Catalyzes the phosphorylation of the 3'-hydroxyl group of dephosphocoenzyme A to form coenzyme A. This Staphylococcus aureus (strain USA300) protein is Dephospho-CoA kinase.